The primary structure comprises 144 residues: uncharacterized protein (144 aa).

The tract at residues 1 to 24 (MGKVIQFPFGEEPEKKEEKELKTE) is disordered. The span at 12–24 (EPEKKEEKELKTE) shows a compositional bias: basic and acidic residues.

This is an uncharacterized protein from Aquifex aeolicus (strain VF5).